A 476-amino-acid polypeptide reads, in one-letter code: 3-isopropylmalate dehydratase large subunit (476 aa).

Cys353, Cys413, and Cys416 together coordinate [4Fe-4S] cluster.

This sequence belongs to the aconitase/IPM isomerase family. LeuC type 1 subfamily. In terms of assembly, heterodimer of LeuC and LeuD. [4Fe-4S] cluster is required as a cofactor.

The catalysed reaction is (2R,3S)-3-isopropylmalate = (2S)-2-isopropylmalate. It functions in the pathway amino-acid biosynthesis; L-leucine biosynthesis; L-leucine from 3-methyl-2-oxobutanoate: step 2/4. Functionally, catalyzes the isomerization between 2-isopropylmalate and 3-isopropylmalate, via the formation of 2-isopropylmaleate. This is 3-isopropylmalate dehydratase large subunit from Yersinia pseudotuberculosis serotype O:1b (strain IP 31758).